The chain runs to 249 residues: Sulfate transporter CysZ (249 aa).

4 helical membrane-spanning segments follow: residues 26 to 46 (LFVL…IYFA), 71 to 91 (VIWP…FTML), 150 to 170 (LFIL…WLLF), and 206 to 226 (LGFG…ILMM).

This sequence belongs to the CysZ family.

The protein resides in the cell inner membrane. Functionally, high affinity, high specificity proton-dependent sulfate transporter, which mediates sulfate uptake. Provides the sulfur source for the cysteine synthesis pathway. The protein is Sulfate transporter CysZ of Pseudomonas fluorescens (strain ATCC BAA-477 / NRRL B-23932 / Pf-5).